A 1179-amino-acid chain; its full sequence is Integrin alpha-1 (1179 aa).

An N-terminal signal peptide occupies residues 1–28 (MVPRRPASLEVTVACIWLLTVILGVCIS). At 29 to 1141 (FNVDVKNSMS…SKDGLPGRVP (1113 aa)) the chain is on the extracellular side. One copy of the FG-GAP 1 repeat lies at 30 to 91 (NVDVKNSMSF…CPVGRERSMP (62 aa)). A disulfide bridge connects residues C82 and C92. N-linked (GlcNAc...) asparagine glycosylation is found at N100, N105, N112, N217, N317, N341, N402, N418, and N459. Residues 101 to 160 (TSIPNVTEIKENMTFGSTLVTNPKGGFLACGPLYAYRCGHLHYTTGICSDVSPTFQVVNS) form an FG-GAP 2 repeat. The 190-residue stretch at 175–364 (IVLDGSNSIY…LGERIFALEA (190 aa)) folds into the VWFA domain. The stretch at 365 to 417 (TADQSAASFEMEMSQTGFSAHYSQDWVMLGAVGAYDWNGTVVMQKANQIVIPH) is one FG-GAP 3 repeat. 4 FG-GAP repeats span residues 422–474 (QTEP…DGDV), 475–537 (NILQ…RFEY), 556–614 (SCTK…TIRK), and 618–678 (QRIP…FEPN). Ca(2+) contacts are provided by D497, D499, D501, and D505. N531 carries an N-linked (GlcNAc...) asparagine glycan. Ca(2+) is bound by residues D579, N581, D583, D587, D641, N643, D645, and D649. C687 and C696 form a disulfide bridge. N-linked (GlcNAc...) asparagine glycans are attached at residues N698, N747, and N779. C702 and C755 form a disulfide bridge. Cysteines 807 and 813 form a disulfide. Residues N839, N882, N907, N938, N965, N973, and N1007 are each glycosylated (N-linked (GlcNAc...) asparagine). C877 and C885 are oxidised to a cystine. 2 disulfide bridges follow: C1029–C1062 and C1065–C1072. N-linked (GlcNAc...) asparagine glycosylation is found at N1083, N1102, and N1113. A helical membrane pass occupies residues 1142 to 1164 (LWVILLSAFAGLLLLMLLILALW). Over 1165–1179 (KIGFFKRPLKKKMEK) the chain is Cytoplasmic. Positions 1167–1171 (GFFKR) match the GFFKR motif motif.

The protein belongs to the integrin alpha chain family. Heterodimer of an alpha and a beta subunit. Alpha-1 associates with beta-1. Interacts with RAB21. Interacts (via cytoplasmic domain) with PTPN2; activates PTPN2 phosphatase activity towards EGFR and negatively regulates EGF signaling.

The protein localises to the membrane. Its function is as follows. Integrin alpha-1/beta-1 is a receptor for laminin and collagen. It recognizes the proline-hydroxylated sequence G-F-P-G-E-R in collagen. Involved in anchorage-dependent, negative regulation of EGF-stimulated cell growth. The chain is Integrin alpha-1 (Itga1) from Mus musculus (Mouse).